Consider the following 451-residue polypeptide: uncharacterized protein (451 aa).

Residues 1-59 enclose the TRAM domain; sequence MLKKNDIVEVEISDLSHDGAGIAKVDGLVFFVDNALPTEKIRMRVLKVKKNIAFGKVES. Residues Gln-283, Tyr-312, Glu-333, and Asp-381 each coordinate S-adenosyl-L-methionine. Residue Cys-408 is the Nucleophile of the active site.

The protein belongs to the class I-like SAM-binding methyltransferase superfamily. RNA M5U methyltransferase family.

This is an uncharacterized protein from Streptococcus mutans serotype c (strain ATCC 700610 / UA159).